We begin with the raw amino-acid sequence, 132 residues long: Acetylcholinesterase (132 aa).

N-linked (GlcNAc...) asparagine glycosylation occurs at N37. C45 and C72 are oxidised to a cystine.

Belongs to the type-B carboxylesterase/lipase family.

The protein localises to the synapse. The protein resides in the secreted. It is found in the cell membrane. It catalyses the reaction acetylcholine + H2O = choline + acetate + H(+). Its function is as follows. Rapidly hydrolyzes choline released into the synapse. The sequence is that of Acetylcholinesterase (ACE-1) from Culex pipiens pipiens (Northern house mosquito).